The following is a 632-amino-acid chain: Phosphoglucomutase, chloroplastic (632 aa).

Residues Met1 to Gln72 constitute a chloroplast transit peptide. Arg97 and Ser190 together coordinate alpha-D-glucose 1,6-bisphosphate. The Phosphoserine intermediate role is filled by Ser190. 4 residues coordinate Mg(2+): Ser190, Asp355, Asp357, and Asp359. At Ser190 the chain carries Phosphoserine. Asp359, Arg360, Thr423, Glu442, Ser444, and Lys455 together coordinate alpha-D-glucose 1,6-bisphosphate.

The protein belongs to the phosphohexose mutase family. As to quaternary structure, monomer. Mg(2+) is required as a cofactor.

The protein localises to the plastid. Its subcellular location is the chloroplast. The catalysed reaction is alpha-D-glucose 1-phosphate = alpha-D-glucose 6-phosphate. It carries out the reaction O-phospho-L-seryl-[protein] + alpha-D-glucose 1-phosphate = alpha-D-glucose 1,6-bisphosphate + L-seryl-[protein]. It catalyses the reaction alpha-D-glucose 1,6-bisphosphate + L-seryl-[protein] = O-phospho-L-seryl-[protein] + alpha-D-glucose 6-phosphate. Inhibited by the Calvin cycle intermediates fructose-1,6-bisphosphate and ribulose-1,5-bisphosphate. Functionally, catalyzes the reversible isomerization of alpha-D-glucose 1-phosphate to alpha-D-glucose 6-phosphate. The mechanism proceeds via the intermediate compound alpha-D-glucose 1,6-bisphosphate. This enzyme participates in both the breakdown and synthesis of glucose. Promotes gravitropic responses, negative in shoots but positive in roots, by facilitating starch granules (statoliths) formation. The sequence is that of Phosphoglucomutase, chloroplastic (PGMP) from Solanum tuberosum (Potato).